A 377-amino-acid polypeptide reads, in one-letter code: Phosphoserine aminotransferase (377 aa).

Residue Arg-43 coordinates L-glutamate. Trp-105, Thr-164, Asp-189, and Gln-212 together coordinate pyridoxal 5'-phosphate. Lys-213 carries the N6-(pyridoxal phosphate)lysine modification. Asn-254 to Thr-255 contacts pyridoxal 5'-phosphate.

It belongs to the class-V pyridoxal-phosphate-dependent aminotransferase family. SerC subfamily. As to quaternary structure, homodimer. Pyridoxal 5'-phosphate is required as a cofactor.

The protein resides in the cytoplasm. The catalysed reaction is O-phospho-L-serine + 2-oxoglutarate = 3-phosphooxypyruvate + L-glutamate. It catalyses the reaction 4-(phosphooxy)-L-threonine + 2-oxoglutarate = (R)-3-hydroxy-2-oxo-4-phosphooxybutanoate + L-glutamate. Its pathway is amino-acid biosynthesis; L-serine biosynthesis; L-serine from 3-phospho-D-glycerate: step 2/3. It functions in the pathway cofactor biosynthesis; pyridoxine 5'-phosphate biosynthesis; pyridoxine 5'-phosphate from D-erythrose 4-phosphate: step 3/5. Its function is as follows. Catalyzes the reversible conversion of 3-phosphohydroxypyruvate to phosphoserine and of 3-hydroxy-2-oxo-4-phosphonooxybutanoate to phosphohydroxythreonine. The chain is Phosphoserine aminotransferase from Bordetella bronchiseptica (strain ATCC BAA-588 / NCTC 13252 / RB50) (Alcaligenes bronchisepticus).